Consider the following 296-residue polypeptide: GTPase Era (296 aa).

The region spanning 7–174 (RAGFVAIVGR…LDEIAAGLPQ (168 aa)) is the Era-type G domain. A G1 region spans residues 15–22 (GRPNVGKS). 15–22 (GRPNVGKS) provides a ligand contact to GTP. A G2 region spans residues 41-45 (QTTRH). Residues 62–65 (DTPG) form a G3 region. GTP contacts are provided by residues 62–66 (DTPGF) and 123–126 (SKID). Residues 123 to 126 (SKID) are G4. A G5 region spans residues 153 to 155 (VSA). The 77-residue stretch at 205-281 (VGDELPYGCT…HLEIYIKVRK (77 aa)) folds into the KH type-2 domain.

Belongs to the TRAFAC class TrmE-Era-EngA-EngB-Septin-like GTPase superfamily. Era GTPase family. As to quaternary structure, monomer.

It localises to the cytoplasm. The protein localises to the cell inner membrane. In terms of biological role, an essential GTPase that binds both GDP and GTP, with rapid nucleotide exchange. Plays a role in 16S rRNA processing and 30S ribosomal subunit biogenesis and possibly also in cell cycle regulation and energy metabolism. This is GTPase Era from Bordetella parapertussis (strain 12822 / ATCC BAA-587 / NCTC 13253).